The following is a 147-amino-acid chain: uncharacterized protein (147 aa).

Residues 1–37 (MVALFKSSLGRPEQHQTPQIRISPASSNVEHSEKQPR) form a disordered region. The span at 15 to 29 (HQTPQIRISPASSNV) shows a compositional bias: polar residues. Residues 71 to 147 (PIPVTKEELA…LKTSFVGFLV (77 aa)) enclose the Cytochrome b5 heme-binding domain. 2 residues coordinate heme: histidine 106 and histidine 129.

This sequence belongs to the cytochrome b5 family.

This is an uncharacterized protein from Schizosaccharomyces pombe (strain 972 / ATCC 24843) (Fission yeast).